A 134-amino-acid chain; its full sequence is MNIIEQLEREEVARLAKTIPDFEPGDTVIVNVRVKEGERTRVQAYEGVCIARNGGGLNESFTVRKISYGEGVERVFPVHSPMIDSIKVVRRGKVRRAKLYYLRDRRGKSARIVERSDRSDKAKAQKAAAATAAE.

A disordered region spans residues lysine 108–glutamate 134. The span at arginine 111–lysine 123 shows a compositional bias: basic and acidic residues. The span at glutamine 125–glutamate 134 shows a compositional bias: low complexity.

Belongs to the bacterial ribosomal protein bL19 family.

Its function is as follows. This protein is located at the 30S-50S ribosomal subunit interface and may play a role in the structure and function of the aminoacyl-tRNA binding site. This chain is Large ribosomal subunit protein bL19, found in Methylorubrum extorquens (strain PA1) (Methylobacterium extorquens).